A 295-amino-acid chain; its full sequence is Zinc finger transcription factor pqm-1 (295 aa).

Residues 1 to 23 are disordered; that stretch reads MSFLNNDFGSPPATSSPPTTMPK. Positions 10 to 22 are enriched in low complexity; that stretch reads SPPATSSPPTTMP. Residues 161–183 form a C2H2-type 1; degenerate zinc finger; sequence YMCTVCRKVYGRYNSVSYHVTIY. A C2H2-type 2 zinc finger spans residues 227-249; it reads RKCPHCRHVSKSPAMLEKHIRRH.

Belongs to the krueppel C2H2-type zinc-finger protein family. As to quaternary structure, interacts with ceh-60.

It localises to the chromosome. It is found in the nucleus. The protein localises to the cytoplasm. Its function is as follows. Zinc finger transcription factor which acts as both a transcriptional activator and repressor. Binds to the promoters of genes that contain the 5'-CTTATCA-3' DNA consensus sequence in their regulatory region. Functions downstream of the Insulin/IGF-1-like signaling (IIS) mediated pathway. Involved in normal development, lifespan, stress response, lipid metabolism, innate immunity and exit from the developmentally arrested larval state known as dauer. Required for stress-induced expression of hsp-90 and resistance to heat stress, perhaps as part of a systemic stress signaling pathway. Involved in maintenance of proteostasis. Under hypoxic stress increases lipid levels by positively regulating fatty acid synthesis via fat-7 expression. Associates with homeobox protein ceh-60 at the promoters of some stress-responsive genes to regulate expression; may require phosphorylation for transcriptional repression activity. Acts downstream of nhr-14 to activate transcription of intestinal metal transporter smf-3, modulating innate immunity and iron uptake. May act downstream of the mTORC2 signaling mediated pathway. May act in a mutually exclusive manner with the FOXO transcription factor daf-16. The sequence is that of Zinc finger transcription factor pqm-1 from Caenorhabditis elegans.